Consider the following 180-residue polypeptide: NADH-quinone oxidoreductase subunit I (180 aa).

4Fe-4S ferredoxin-type domains are found at residues 50 to 80 (LTRDPDGEERCVACNLCAVACPVGCISLQKA) and 90 to 119 (EFFRINFSRCIFCGLCEEACPTTAIQLTPD). Positions 60, 63, 66, 70, 99, 102, 105, and 109 each coordinate [4Fe-4S] cluster.

Belongs to the complex I 23 kDa subunit family. As to quaternary structure, NDH-1 is composed of 13 different subunits. Subunits NuoA, H, J, K, L, M, N constitute the membrane sector of the complex. Requires [4Fe-4S] cluster as cofactor.

The protein resides in the cell inner membrane. It carries out the reaction a quinone + NADH + 5 H(+)(in) = a quinol + NAD(+) + 4 H(+)(out). NDH-1 shuttles electrons from NADH, via FMN and iron-sulfur (Fe-S) centers, to quinones in the respiratory chain. The immediate electron acceptor for the enzyme in this species is believed to be ubiquinone. Couples the redox reaction to proton translocation (for every two electrons transferred, four hydrogen ions are translocated across the cytoplasmic membrane), and thus conserves the redox energy in a proton gradient. The chain is NADH-quinone oxidoreductase subunit I from Yersinia enterocolitica serotype O:8 / biotype 1B (strain NCTC 13174 / 8081).